A 213-amino-acid polypeptide reads, in one-letter code: Phosphatidylcholine transfer protein (213 aa).

N-acetylmethionine is present on M1. The 212-residue stretch at 1-212 (MDPGAGAFSE…MVKACQNYKK (212 aa)) folds into the START domain. The a 1,2-diacyl-sn-glycero-3-phosphocholine site is built by Y72 and R78. S139 bears the Phosphoserine mark. Residue Q157 participates in a 1,2-diacyl-sn-glycero-3-phosphocholine binding. The tract at residues 171–176 (VFMYYF) is part of the binding site for phosphatidylcholine.

In terms of assembly, interacts with ACOT13/THEM2.

Its subcellular location is the cytoplasm. Catalyzes the transfer of phosphatidylcholine between membranes. Binds phosphatidylcholine in a tight 1:1 stoichiometric complex. In Bos taurus (Bovine), this protein is Phosphatidylcholine transfer protein (PCTP).